The chain runs to 723 residues: MSPATRFTVISCLVVSLITPSETSSWFDPFIEWARSSPNMTCVNNRTGTRSLATEGLISFNFYEASRTVRTYQVPKCIFMSSVSKTIMQGVDLFESLESYRRRYYSYIIVPVHASFQIFIHDLRTDLSSPTEELTSPVDKTLPNVTIWHTPSGYVIRLLDVVTPRFEECTLFPNHTVIFDMTVPCSQEVYLRQTGKHQFAIVLTFTPSFFVLNIQTAQHQHVTENDEDVILIFGDVRSIDVKAPYSKPVLTLRQSYRDDLLIVAKTSIVNATYPFIKTQDFLKGTLSGNYLDFNHVYTEFNRLVIHNLVEGLCDAPPDDRTVSMVFSYAVLARTLYHTSNVTARLEDVALRYVRLTLARTFLQQCFDVGPRYMRFPTIDGALSVLLKLIRNSRDVDGGLKLSLTFALIFGNNTDMTKERDLENALYEMKSIHRAGLVSPLSPRQRSLLYMMAYVTHHTTAFPDIRREMLAMQTSLCSPQELYNWAPHVSSAGLTMQEMFTPCSGSGRRDYSEARIAEIVQLNPLTTKTPADLYRILAHFDRSNLTNFPALSCISHLSGYVAVTLRDVTYVVSSNVMLKGTSYPVTNLAVDKTMIVTVSPAQHPCEKTEVAHATRSIPIVKNITIGNDCEYCKSAIMEYDEVNGLSNIVYLADTADLVLVTNLDNRILASSPRTRYIMMTANGTLMEITSVIIDIRQTSIFMIMLYCSLGVLLLYGLYRLLHMI.

An N-terminal signal peptide occupies residues 1 to 23 (MSPATRFTVISCLVVSLITPSET). At 24–700 (SSWFDPFIEW…IIDIRQTSIF (677 aa)) the chain is on the virion surface side. 4 N-linked (GlcNAc...) asparagine; by host glycosylation sites follow: Asn-39, Asn-45, Asn-144, and Asn-174. The tract at residues 197 to 263 (HQFAIVLTFT…QSYRDDLLIV (67 aa)) is interaction with gL. Asn-270, Asn-340, Asn-411, Asn-543, Asn-621, and Asn-681 each carry an N-linked (GlcNAc...) asparagine; by host glycan. The helical transmembrane segment at 701–721 (MIMLYCSLGVLLLYGLYRLLH) threads the bilayer. At 722–723 (MI) the chain is on the intravirion side.

It belongs to the herpesviridae glycoprotein H family. In terms of assembly, interacts with glycoprotein L (gL); this interaction is necessary for the correct processing and cell surface expression of gH. The heterodimer gH/gL seems to interact with gB trimers during fusion. N-glycosylated, O-glycosylated, and sialylated.

Its subcellular location is the virion membrane. The protein localises to the host cell membrane. The protein resides in the host endosome membrane. In terms of biological role, the heterodimer glycoprotein H-glycoprotein L is required for the fusion of viral and plasma membranes leading to virus entry into the host cell. Following initial binding to host receptor, membrane fusion is mediated by the fusion machinery composed of gB and the heterodimer gH/gL. May also be involved in the fusion between the virion envelope and the outer nuclear membrane during virion morphogenesis. The protein is Envelope glycoprotein H of Guinea pig cytomegalovirus (strain 22122) (GPCMV).